Here is a 422-residue protein sequence, read N- to C-terminus: Serine--tRNA ligase (422 aa).

229 to 231 (TAE) contacts L-serine. 260–262 (RKE) provides a ligand contact to ATP. E283 contacts L-serine. 347–350 (EISS) provides a ligand contact to ATP. Position 383 (S383) interacts with L-serine.

It belongs to the class-II aminoacyl-tRNA synthetase family. Type-1 seryl-tRNA synthetase subfamily. Homodimer. The tRNA molecule binds across the dimer.

Its subcellular location is the cytoplasm. The catalysed reaction is tRNA(Ser) + L-serine + ATP = L-seryl-tRNA(Ser) + AMP + diphosphate + H(+). It catalyses the reaction tRNA(Sec) + L-serine + ATP = L-seryl-tRNA(Sec) + AMP + diphosphate + H(+). It participates in aminoacyl-tRNA biosynthesis; selenocysteinyl-tRNA(Sec) biosynthesis; L-seryl-tRNA(Sec) from L-serine and tRNA(Sec): step 1/1. Its function is as follows. Catalyzes the attachment of serine to tRNA(Ser). Is also able to aminoacylate tRNA(Sec) with serine, to form the misacylated tRNA L-seryl-tRNA(Sec), which will be further converted into selenocysteinyl-tRNA(Sec). This chain is Serine--tRNA ligase, found in Geobacter sulfurreducens (strain ATCC 51573 / DSM 12127 / PCA).